Here is a 418-residue protein sequence, read N- to C-terminus: MRFSQATVLAFAALSLAAPAFEADNKNIKREDCDKTSFHGHHKHKRAVAYDYAYVTVTVDGNGNPITTVSPVLSIETIAKSEETSSTSTSISSTTTIVQNDSLTSDEPKTLSLPSGTIKPSSFATESQSQSQSSSTGGSGSGSTNGIEGDLAAFEDPTEEFEDGVLSCSDFPSGQGVIPLDHLGFGGWSGIENSDGSTGGNCKEGSYCSYACQSGMSKTQWPEDQPSNGVSIGGLLCKNGKLYKSSTRSNYLCEWGVKKANVVNKLSETVAICRTDYPGTENMVIPTVVGGGSTSVITVVDQSTYYTWRGGATSAQYYVNNAGVSWEDGCVWGTPGSGVGNWAPLNFGAGYANGIAYLSLIPNPNNRDSLNFKVKIVGESGSTVSGSCSYANGKFNGNSDDGCTVGVTSGEADFVLYN.

Positions 1–23 (MRFSQATVLAFAALSLAAPAFEA) are cleaved as a signal peptide. Residues 81 to 97 (SEETSSTSTSISSTTTI) are compositionally biased toward low complexity. A disordered region spans residues 81-150 (SEETSSTSTS…SGSTNGIEGD (70 aa)). An N-linked (GlcNAc...) asparagine glycan is attached at Asn100. Residues 112 to 126 (SLPSGTIKPSSFATE) are compositionally biased toward polar residues. A compositionally biased stretch (low complexity) spans 127 to 136 (SQSQSQSSST).

Belongs to the SUN family. Post-translationally, predicted to be a substrate for cleavage by KEX2.

It is found in the secreted. It localises to the cell wall. Functionally, cell surface beta-glucosidase involved in cytokinesis, cell wall biogenesis, adhesion to host tissue, and biofilm formation; thus playing an important role in the host-pathogen interaction. Has hydrolytic activity on linear (1-&gt;3)-beta-D-glucans such as laminaribiose and other laminarioligosaccharides. This is Secreted beta-glucosidase SUN41 from Candida albicans (strain SC5314 / ATCC MYA-2876) (Yeast).